We begin with the raw amino-acid sequence, 304 residues long: ATP phosphoribosyltransferase (304 aa).

This sequence belongs to the ATP phosphoribosyltransferase family. Long subfamily. Mg(2+) is required as a cofactor.

The protein localises to the cytoplasm. The enzyme catalyses 1-(5-phospho-beta-D-ribosyl)-ATP + diphosphate = 5-phospho-alpha-D-ribose 1-diphosphate + ATP. It participates in amino-acid biosynthesis; L-histidine biosynthesis; L-histidine from 5-phospho-alpha-D-ribose 1-diphosphate: step 1/9. Feedback inhibited by histidine. Functionally, catalyzes the condensation of ATP and 5-phosphoribose 1-diphosphate to form N'-(5'-phosphoribosyl)-ATP (PR-ATP). Has a crucial role in the pathway because the rate of histidine biosynthesis seems to be controlled primarily by regulation of HisG enzymatic activity. The chain is ATP phosphoribosyltransferase from Xanthomonas oryzae pv. oryzae (strain MAFF 311018).